Reading from the N-terminus, the 201-residue chain is Cysteine dioxygenase type 1 (201 aa).

Residues His-86, His-88, and His-141 each coordinate Fe cation. Residues 93–158 (CFLKLLQGQL…TEPAVSLHLY (66 aa)) constitute a cross-link (3'-(S-cysteinyl)-tyrosine (Cys-Tyr)).

It belongs to the cysteine dioxygenase family. As to quaternary structure, monomer. Requires Fe cation as cofactor. It depends on Ni(2+) as a cofactor. Zn(2+) serves as cofactor. Post-translationally, the thioether cross-link between Cys-93 and Tyr-158 plays a structural role through stabilizing the Fe(2+) ion, and prevents the production of highly damaging free hydroxyl radicals by holding the oxygen radical via hydroxyl hydrogen.

The catalysed reaction is L-cysteine + O2 = 3-sulfino-L-alanine + H(+). It participates in organosulfur biosynthesis; taurine biosynthesis; hypotaurine from L-cysteine: step 1/2. Its function is as follows. Catalyzes the oxidation of cysteine to cysteine sulfinic acid with addition of molecular dioxygen. This Danio rerio (Zebrafish) protein is Cysteine dioxygenase type 1 (cdo1).